The following is a 343-amino-acid chain: UDP-3-O-acylglucosamine N-acyltransferase (343 aa).

His236 serves as the catalytic Proton acceptor.

It belongs to the transferase hexapeptide repeat family. LpxD subfamily. In terms of assembly, homotrimer.

It carries out the reaction a UDP-3-O-[(3R)-3-hydroxyacyl]-alpha-D-glucosamine + a (3R)-hydroxyacyl-[ACP] = a UDP-2-N,3-O-bis[(3R)-3-hydroxyacyl]-alpha-D-glucosamine + holo-[ACP] + H(+). The protein operates within bacterial outer membrane biogenesis; LPS lipid A biosynthesis. Functionally, catalyzes the N-acylation of UDP-3-O-acylglucosamine using 3-hydroxyacyl-ACP as the acyl donor. Is involved in the biosynthesis of lipid A, a phosphorylated glycolipid that anchors the lipopolysaccharide to the outer membrane of the cell. In Syntrophotalea carbinolica (strain DSM 2380 / NBRC 103641 / GraBd1) (Pelobacter carbinolicus), this protein is UDP-3-O-acylglucosamine N-acyltransferase.